We begin with the raw amino-acid sequence, 501 residues long: MELHNDEKRLLKAFKDSAKNIIDSEGLLEYIEKEKIMRAAFWLTGRDFLNIIEKKSKFLELTELGKNAIESGFPERKVSNYLKTNKLDSFPIKDLSKVLEKDEAGAALGNLKKKELVTIEKGNIFFKSLEYKDLEEELLKKVSLYPNLEEYSKEEILTIETLKKRGFLKLNEVTEREFEITVKGLEYIKNPIEIKEEVTQITRDLIVSGKWKEVSIRPYDAKIPTEEIYPAKAHPMSKIIEEVTEVLTSMGFSEVKSQIVQTEFWNFDTLFEPQDHPARDMQDTFFVKYPDTGIVPHELLKKVKSIHECGKIENEKISKGWCYKFDEEVSKRTVLRTHTTVSSIKYLSSLSNEEKENFHKVFCIDRVFRNETIDYKHLPEFYQCEGIIMAEDVSFNNLVGILKEFLSKLGFEKVRIRPAYFPFTEPSLEAEVYMEGKGWLELLGAGIFRPEVLEPFGIKKPVLAWGIGLSRLAMLRLGLTDIRELHKNDIEWLKKTVVIEK.

Residues threonine 340 and phenylalanine 423 each contribute to the L-phenylalanine site. Position 425 (glutamate 425) interacts with Mg(2+). Phenylalanine 448 contributes to the L-phenylalanine binding site.

It belongs to the class-II aminoacyl-tRNA synthetase family. Phe-tRNA synthetase alpha subunit type 2 subfamily. Tetramer of two alpha and two beta subunits. The cofactor is Mg(2+).

Its subcellular location is the cytoplasm. It carries out the reaction tRNA(Phe) + L-phenylalanine + ATP = L-phenylalanyl-tRNA(Phe) + AMP + diphosphate + H(+). The chain is Phenylalanine--tRNA ligase alpha subunit from Methanococcus vannielii (strain ATCC 35089 / DSM 1224 / JCM 13029 / OCM 148 / SB).